A 144-amino-acid polypeptide reads, in one-letter code: MSIRERLLATVSRYIAAYNEFDPSAMKTVRTVSCLTHGIAPTCKFTQSVEEHTKHMMLSRGVFRSVNASIVDDGTTVVDEGSRKVVVKVKLRCETIVGPYENEAMFIMAMDEEGTLVDGIFQFLDTACFRQFQGRLEEAHVSRD.

It belongs to the trt14 isomerase family. As to quaternary structure, homodimer.

It participates in secondary metabolite biosynthesis; terpenoid biosynthesis. Part of the gene cluster that mediates the biosynthesis of calidodehydroaustin, a fungal meroterpenoid. The first step of the pathway is the synthesis of 3,5-dimethylorsellinic acid by the polyketide synthase ausA. 3,5-dimethylorsellinic acid is then prenylated by the polyprenyl transferase ausN. Further epoxidation by the FAD-dependent monooxygenase ausM and cyclization by the probable terpene cyclase ausL lead to the formation of protoaustinoid A. Protoaustinoid A is then oxidized to spiro-lactone preaustinoid A3 by the combined action of the FAD-binding monooxygenases ausB and ausC, and the dioxygenase ausE. Acid-catalyzed keto-rearrangement and ring contraction of the tetraketide portion of preaustinoid A3 by ausJ lead to the formation of preaustinoid A4. The aldo-keto reductase ausK, with the help of ausH, is involved in the next step by transforming preaustinoid A4 into isoaustinone which is in turn hydroxylated by the P450 monooxygenase ausI to form austinolide. The cytochrome P450 monooxygenase ausG modifies austinolide to austinol. Austinol is further acetylated to austin by the O-acetyltransferase ausP, which spontaneously changes to dehydroaustin. The cytochrome P450 monooxygenase ausR then converts dehydroaustin is into 7-dehydrodehydroaustin. The hydroxylation catalyzed by ausR permits the O-acetyltransferase ausQ to add an additional acetyl group to the molecule, leading to the formation of acetoxydehydroaustin. The short chain dehydrogenase ausT catalyzes the reduction of the double bond present between carbon atoms 1 and 2 to convert 7-dehydrodehydroaustin into 1,2-dihydro-7-hydroxydehydroaustin. AusQ catalyzes not only an acetylation reaction but also the addition of the PKS ausV diketide product to 1,2-dihydro-7-hydroxydehydroaustin, forming precalidodehydroaustin. Finally, the iron/alpha-ketoglutarate-dependent dioxygenase converts precalidodehydroaustin into calidodehydroaustin. AusS is necessary for austinoids production and may play a possible function as a regulator. Its function is as follows. May play a possible function as a regulator. In Aspergillus calidoustus, this protein is Austinoid biosynthesis cluster protein S.